A 266-amino-acid polypeptide reads, in one-letter code: Shikimate dehydrogenase (NADP(+)) (266 aa).

Shikimate is bound by residues 14–16 (SLS) and T61. The active-site Proton acceptor is K65. The shikimate site is built by N85 and D100. NADP(+)-binding positions include 124–128 (GAGGA) and A210. Residue Y212 participates in shikimate binding. G233 serves as a coordination point for NADP(+).

The protein belongs to the shikimate dehydrogenase family. In terms of assembly, homodimer.

It carries out the reaction shikimate + NADP(+) = 3-dehydroshikimate + NADPH + H(+). It participates in metabolic intermediate biosynthesis; chorismate biosynthesis; chorismate from D-erythrose 4-phosphate and phosphoenolpyruvate: step 4/7. Involved in the biosynthesis of the chorismate, which leads to the biosynthesis of aromatic amino acids. Catalyzes the reversible NADPH linked reduction of 3-dehydroshikimate (DHSA) to yield shikimate (SA). This chain is Shikimate dehydrogenase (NADP(+)), found in Halobacterium salinarum (strain ATCC 29341 / DSM 671 / R1).